A 513-amino-acid polypeptide reads, in one-letter code: Protein phosphatase 1H (513 aa).

Phosphoserine is present on serine 7. The PPM-type phosphatase domain occupies 77–506; it reads ATGYAEVINA…DDISVYVIPL (430 aa). A disordered region spans residues 110-133; that stretch reads ITSTPNRNSKRRSSLPNGEGLQLK. Threonine 113 carries the phosphothreonine modification. Residues serine 123 and serine 210 each carry the phosphoserine modification. Arginine 212 carries the omega-N-methylarginine modification. At serine 220 the chain carries Phosphoserine. Threonine 223 carries the post-translational modification Phosphothreonine. Serine 421 carries the post-translational modification Phosphoserine.

This sequence belongs to the PP2C family.

It localises to the nucleus. Its subcellular location is the cytoplasm. It catalyses the reaction O-phospho-L-seryl-[protein] + H2O = L-seryl-[protein] + phosphate. The enzyme catalyses O-phospho-L-threonyl-[protein] + H2O = L-threonyl-[protein] + phosphate. Dephosphorylates CDKN1B at 'Thr-187', thus removing a signal for proteasomal degradation. This is Protein phosphatase 1H (Ppm1h) from Rattus norvegicus (Rat).